We begin with the raw amino-acid sequence, 630 residues long: Ubiquitin carboxyl-terminal hydrolase MINDY-2 (630 aa).

The interval 1-209 (MESGPESLQP…RVPEEEEGAA (209 aa)) is disordered. The span at 24 to 33 (GSPQEGQQET) shows a compositional bias: polar residues. S94 bears the Phosphoserine mark. Low complexity-rich tracts occupy residues 141-163 (EESA…SCSD) and 170-191 (SPSL…SSEF). Catalysis depends on C267, which acts as the Nucleophile. H449 functions as the Proton acceptor in the catalytic mechanism. The segment at 508-560 (GQQDQIDQDYLMALSLQQEQQSQEINWEQIPEGISDLELAKKLQEEEDRRASQ) is ubiquitin-binding domain (UBD). Low complexity predominate over residues 564-599 (EQEQAAAAAASASASASASASTQAPQSQPVQASPSS). The tract at residues 564–630 (EQEQAAAAAA…EKEKNSCVIL (67 aa)) is disordered. Positions 606 to 630 (SERKRKEPREKDKEKEKEKNSCVIL) are enriched in basic and acidic residues.

Belongs to the MINDY deubiquitinase family. FAM63 subfamily.

It catalyses the reaction Thiol-dependent hydrolysis of ester, thioester, amide, peptide and isopeptide bonds formed by the C-terminal Gly of ubiquitin (a 76-residue protein attached to proteins as an intracellular targeting signal).. Functionally, hydrolase that can remove 'Lys-48'-linked conjugated ubiquitin from proteins. Can also bind to polyubiquitin chains of different linkage types, including 'Lys-6', 'Lys-11', 'Lys-29', 'Lys-33' and 'Lys-63'. May play a regulatory role at the level of protein turnover. The polypeptide is Ubiquitin carboxyl-terminal hydrolase MINDY-2 (MINDY2) (Bos taurus (Bovine)).